We begin with the raw amino-acid sequence, 164 residues long: UPF0304 protein Ent638_2838 (164 aa).

This sequence belongs to the UPF0304 family.

This Enterobacter sp. (strain 638) protein is UPF0304 protein Ent638_2838.